The sequence spans 142 residues: MAKKVEALIKLQVNAGMANPSPPVGPALGQHGVNIMEFCKAFNARTESIEKGAPVPVVISVYGDRSFTFDMKTPPAAYLLLKAAGVKSGSGRPNTEKVGTVTRAQLEEIVETKRADLTASDLEAAVRTIAGSARAMGLSVED.

The protein belongs to the universal ribosomal protein uL11 family. Part of the ribosomal stalk of the 50S ribosomal subunit. Interacts with L10 and the large rRNA to form the base of the stalk. L10 forms an elongated spine to which L12 dimers bind in a sequential fashion forming a multimeric L10(L12)X complex. One or more lysine residues are methylated.

Forms part of the ribosomal stalk which helps the ribosome interact with GTP-bound translation factors. This chain is Large ribosomal subunit protein uL11, found in Pseudoalteromonas translucida (strain TAC 125).